We begin with the raw amino-acid sequence, 161 residues long: SsrA-binding protein (161 aa).

The protein belongs to the SmpB family.

The protein resides in the cytoplasm. Its function is as follows. Required for rescue of stalled ribosomes mediated by trans-translation. Binds to transfer-messenger RNA (tmRNA), required for stable association of tmRNA with ribosomes. tmRNA and SmpB together mimic tRNA shape, replacing the anticodon stem-loop with SmpB. tmRNA is encoded by the ssrA gene; the 2 termini fold to resemble tRNA(Ala) and it encodes a 'tag peptide', a short internal open reading frame. During trans-translation Ala-aminoacylated tmRNA acts like a tRNA, entering the A-site of stalled ribosomes, displacing the stalled mRNA. The ribosome then switches to translate the ORF on the tmRNA; the nascent peptide is terminated with the 'tag peptide' encoded by the tmRNA and targeted for degradation. The ribosome is freed to recommence translation, which seems to be the essential function of trans-translation. The protein is SsrA-binding protein of Baumannia cicadellinicola subsp. Homalodisca coagulata.